A 390-amino-acid polypeptide reads, in one-letter code: Mevalonate kinase (390 aa).

ATP-binding positions include Lys-16, Ser-130, and 135 to 141; that span reads GAGLGSS. Positions 141 and 193 each coordinate Mg(2+). Asp-204 serves as the catalytic Proton acceptor.

It belongs to the GHMP kinase family. Mevalonate kinase subfamily. The cofactor is Mg(2+).

The protein resides in the cytoplasm. The enzyme catalyses (R)-mevalonate + ATP = (R)-5-phosphomevalonate + ADP + H(+). The protein operates within isoprenoid biosynthesis; isopentenyl diphosphate biosynthesis via mevalonate pathway; isopentenyl diphosphate from (R)-mevalonate: step 1/3. Catalyzes the phosphorylation of mevalonate to mevalonate 5-phosphate, a key step in isoprenoid biosynthesis. This chain is Mevalonate kinase, found in Dictyostelium discoideum (Social amoeba).